Here is a 406-residue protein sequence, read N- to C-terminus: Putative permease Rv2963 (406 aa).

9 helical membrane-spanning segments follow: residues 30 to 50, 67 to 87, 111 to 131, 132 to 152, 208 to 228, 246 to 266, 278 to 298, 312 to 332, and 361 to 381; these read WEILWALILGFALSAVVQAVV, LVIATGLGAASSSCSYAAVAL, LVVELGIILALLMGWQFTAAE, FVGGPIMILVLAVLFRLFVGA, LAILRDLILGLLIAGAIAAWV, AVWGPIIGPIVAIVSFVCSIG, GISFGGVIAFIFADLLILPIL, VLLGTFYASMVVAGYLIELLF, and VIFLVIAAALVVRFITSGGLP.

This sequence belongs to the UPF0718 family.

It is found in the cell membrane. In Mycobacterium tuberculosis (strain ATCC 25618 / H37Rv), this protein is Putative permease Rv2963.